The chain runs to 714 residues: Solute carrier family 12 member 8 (714 aa).

A run of 6 helical transmembrane segments spans residues Val37–Leu60, Leu72–Ile93, Ser99–Gly116, Gly123–Ala142, Ile154–Leu173, and Leu185–Leu205. A glycan (N-linked (GlcNAc...) asparagine) is linked at Asn221. Transmembrane regions (helical) follow at residues Phe233 to Gly254, Leu266 to Ile289, Gly309 to Ala331, Pro360 to Val377, and Leu383 to Phe403. 2 disordered regions span residues Lys471–Asp503 and Gly530–Thr550. Over residues Ser533–Glu548 the composition is skewed to polar residues. 2 consecutive transmembrane segments (helical) span residues Cys593–Tyr616 and Gly622–Ala643.

Belongs to the SLC12A transporter family. In terms of tissue distribution, ubiquitous with very low level in normal skin.

The protein resides in the membrane. In terms of biological role, cation/chloride cotransporter that may play a role in the control of keratinocyte proliferation. The chain is Solute carrier family 12 member 8 (SLC12A8) from Homo sapiens (Human).